Reading from the N-terminus, the 94-residue chain is Large ribosomal subunit protein uL23 (94 aa).

This sequence belongs to the universal ribosomal protein uL23 family. As to quaternary structure, part of the 50S ribosomal subunit. Contacts protein L29, and trigger factor when it is bound to the ribosome.

Its function is as follows. One of the early assembly proteins it binds 23S rRNA. One of the proteins that surrounds the polypeptide exit tunnel on the outside of the ribosome. Forms the main docking site for trigger factor binding to the ribosome. This is Large ribosomal subunit protein uL23 from Phytoplasma australiense.